The primary structure comprises 461 residues: D-phenylhydantoinase (461 aa).

A divalent metal cation-binding residues include His59, His61, and Lys151. An N6-carboxylysine modification is found at Lys151. A substrate-binding site is contributed by Tyr156. A divalent metal cation is bound by residues His182 and His239. A substrate-binding site is contributed by Ser286. Residue Asp313 coordinates a divalent metal cation. Asn335 lines the substrate pocket.

The protein belongs to the metallo-dependent hydrolases superfamily. Hydantoinase/dihydropyrimidinase family. Homotetramer. The cofactor is a divalent metal cation. Post-translationally, carboxylation allows a single lysine to coordinate two divalent metal cations.

It carries out the reaction D-5-phenylhydantoin + H2O = N-carbamoyl-D-phenylglycine + H(+). Functionally, catalyzes the stereospecific hydrolysis of the cyclic amide bond of D-hydantoin derivatives with an aromatic side chains at the 5'-position. Has no activity on dihydropyrimidines. The physiological function is unknown. In Escherichia coli O7:K1 (strain IAI39 / ExPEC), this protein is D-phenylhydantoinase.